Reading from the N-terminus, the 220-residue chain is Claudin-24 (220 aa).

Over 1–10 (MALIFRTAMQ) the chain is Cytoplasmic. Residues 11 to 31 (SVGLLLSLLGWILSIITTYLP) form a helical membrane-spanning segment. Residues 32 to 81 (HWKNLNLDLNEMENWTMGLWQTCVIQEEVGMQCKDFDSFLALPAELRVSR) are Extracellular-facing. Residues 82–102 (ILMFLSNGLGFLGLLVSGFGL) form a helical membrane-spanning segment. The Cytoplasmic segment spans residues 103-117 (DCLRIGESQRDLKRR). A helical transmembrane segment spans residues 118-138 (LLILGGILSWASGITALVPVS). At 139–161 (WVAHKTVQEFWDENVPDFVPRWE) the chain is on the extracellular side. A helical transmembrane segment spans residues 162 to 182 (FGEALFLGWFAGLSLLLGGCL). Topologically, residues 183 to 220 (LNCAACSSHAPLALGHYAVAQMQTQCPYLEDGTADPQV) are cytoplasmic.

It belongs to the claudin family.

The protein resides in the cell junction. It is found in the tight junction. It localises to the cell membrane. Functionally, plays a major role in tight junction-specific obliteration of the intercellular space, through calcium-independent cell-adhesion activity. This chain is Claudin-24, found in Homo sapiens (Human).